Reading from the N-terminus, the 463-residue chain is Fumarate hydratase class II (463 aa).

Residues 95–97 (SGT), 126–129 (HPND), 136–138 (SSN), and Thr-184 contribute to the substrate site. His-185 functions as the Proton donor/acceptor in the catalytic mechanism. The active site involves Ser-315. Substrate contacts are provided by residues Ser-316 and 321–323 (KIN).

The protein belongs to the class-II fumarase/aspartase family. Fumarase subfamily. In terms of assembly, homotetramer.

Its subcellular location is the cytoplasm. The enzyme catalyses (S)-malate = fumarate + H2O. It participates in carbohydrate metabolism; tricarboxylic acid cycle; (S)-malate from fumarate: step 1/1. Involved in the TCA cycle. Catalyzes the stereospecific interconversion of fumarate to L-malate. This chain is Fumarate hydratase class II, found in Chlamydia muridarum (strain MoPn / Nigg).